A 181-amino-acid chain; its full sequence is Adenine phosphoribosyltransferase (181 aa).

The protein belongs to the purine/pyrimidine phosphoribosyltransferase family. As to quaternary structure, homodimer.

It is found in the cytoplasm. It carries out the reaction AMP + diphosphate = 5-phospho-alpha-D-ribose 1-diphosphate + adenine. It functions in the pathway purine metabolism; AMP biosynthesis via salvage pathway; AMP from adenine: step 1/1. Catalyzes a salvage reaction resulting in the formation of AMP, that is energically less costly than de novo synthesis. The protein is Adenine phosphoribosyltransferase of Shewanella woodyi (strain ATCC 51908 / MS32).